Reading from the N-terminus, the 355-residue chain is Peptide chain release factor 1 (355 aa).

At Q234 the chain carries N5-methylglutamine.

Belongs to the prokaryotic/mitochondrial release factor family. Post-translationally, methylated by PrmC. Methylation increases the termination efficiency of RF1.

The protein resides in the cytoplasm. Its function is as follows. Peptide chain release factor 1 directs the termination of translation in response to the peptide chain termination codons UAG and UAA. In Metamycoplasma arthritidis (strain 158L3-1) (Mycoplasma arthritidis), this protein is Peptide chain release factor 1.